The following is a 205-amino-acid chain: Ribosomal RNA small subunit methyltransferase G (205 aa).

S-adenosyl-L-methionine-binding positions include G66, F71, 119–120 (IE), and R135.

Belongs to the methyltransferase superfamily. RNA methyltransferase RsmG family.

It localises to the cytoplasm. It carries out the reaction guanosine(527) in 16S rRNA + S-adenosyl-L-methionine = N(7)-methylguanosine(527) in 16S rRNA + S-adenosyl-L-homocysteine. In terms of biological role, specifically methylates the N7 position of guanine in position 527 of 16S rRNA. The polypeptide is Ribosomal RNA small subunit methyltransferase G (Rhizobium leguminosarum bv. trifolii (strain WSM2304)).